The chain runs to 169 residues: 16S rRNA aminocarboxypropyltransferase (169 aa).

S-adenosyl-L-methionine contacts are provided by Thr-15, Val-65, Leu-88, and Thr-107.

Belongs to the TDD superfamily. TSR3 family.

Its subcellular location is the cytoplasm. It catalyses the reaction an N(1)-methylpseudouridine in rRNA + S-adenosyl-L-methionine = N(1)-methyl-N(3)-[(3S)-3-amino-3-carboxypropyl]pseudouridine in rRNA + S-methyl-5'-thioadenosine + H(+). Its function is as follows. Aminocarboxypropyltransferase that catalyzes the aminocarboxypropyl transfer on pseudouridine corresponding to position 914 in M.jannaschii 16S rRNA. It constitutes the last step in biosynthesis of the hypermodified N1-methyl-N3-(3-amino-3-carboxypropyl) pseudouridine (m1acp3-Psi). The protein is 16S rRNA aminocarboxypropyltransferase of Methanopyrus kandleri (strain AV19 / DSM 6324 / JCM 9639 / NBRC 100938).